The chain runs to 352 residues: tRNA-specific 2-thiouridylase MnmA (352 aa).

ATP-binding positions include 11-18 (AMSGGVDS) and Met-37. The Nucleophile role is filled by Cys-101. A disulfide bridge connects residues Cys-101 and Cys-197. Residue Gly-125 coordinates ATP. An interaction with tRNA region spans residues 147-149 (KDQ). Cys-197 acts as the Cysteine persulfide intermediate in catalysis. Residues 302 to 303 (RY) form an interaction with tRNA region.

This sequence belongs to the MnmA/TRMU family.

It is found in the cytoplasm. The catalysed reaction is S-sulfanyl-L-cysteinyl-[protein] + uridine(34) in tRNA + AH2 + ATP = 2-thiouridine(34) in tRNA + L-cysteinyl-[protein] + A + AMP + diphosphate + H(+). In terms of biological role, catalyzes the 2-thiolation of uridine at the wobble position (U34) of tRNA, leading to the formation of s(2)U34. The sequence is that of tRNA-specific 2-thiouridylase MnmA from Syntrophotalea carbinolica (strain DSM 2380 / NBRC 103641 / GraBd1) (Pelobacter carbinolicus).